The sequence spans 357 residues: Quinolinate synthase (357 aa).

The iminosuccinate site is built by His-50 and Ser-71. Cys-116 lines the [4Fe-4S] cluster pocket. Residues 142–144 and Ser-159 each bind iminosuccinate; that span reads YAN. Cys-203 contacts [4Fe-4S] cluster. Iminosuccinate-binding positions include 229 to 231 and Thr-246; that span reads HPE. Cys-300 serves as a coordination point for [4Fe-4S] cluster.

This sequence belongs to the quinolinate synthase family. Type 1 subfamily. The cofactor is [4Fe-4S] cluster.

It is found in the cytoplasm. The enzyme catalyses iminosuccinate + dihydroxyacetone phosphate = quinolinate + phosphate + 2 H2O + H(+). It functions in the pathway cofactor biosynthesis; NAD(+) biosynthesis; quinolinate from iminoaspartate: step 1/1. In terms of biological role, catalyzes the condensation of iminoaspartate with dihydroxyacetone phosphate to form quinolinate. The sequence is that of Quinolinate synthase from Shewanella sp. (strain ANA-3).